A 546-amino-acid chain; its full sequence is Glutamate--tRNA ligase (546 aa).

Positions 41–51 match the 'HIGH' region motif; sequence PSPTGFQHIGG. A 'KMSKS' region motif is present at residues 293–297; it reads KLSKR. Residue lysine 296 participates in ATP binding.

Belongs to the class-I aminoacyl-tRNA synthetase family. Glutamate--tRNA ligase type 1 subfamily. Monomer.

It is found in the cytoplasm. It catalyses the reaction tRNA(Glu) + L-glutamate + ATP = L-glutamyl-tRNA(Glu) + AMP + diphosphate. Functionally, catalyzes the attachment of glutamate to tRNA(Glu) in a two-step reaction: glutamate is first activated by ATP to form Glu-AMP and then transferred to the acceptor end of tRNA(Glu). This Clostridium perfringens (strain 13 / Type A) protein is Glutamate--tRNA ligase.